A 473-amino-acid chain; its full sequence is Photosystem II CP43 reaction center protein (473 aa).

Positions 1 to 14 (MKTLYSLRRFYHVE) are excised as a propeptide. T15 bears the N-acetylthreonine mark. T15 carries the post-translational modification Phosphothreonine. The next 5 helical transmembrane spans lie at 69–93 (LFEVAHFVPEKPMYEQGLILLPHLA), 134–155 (LLGPETLEESFPFFGYVWKDRN), 178–200 (KALYFGGVYDTWAPGGGDVRKIT), 255–275 (KPFAWARRALVWSGEAYLSYS), and 291–312 (CFNNTAYPSEFYGPTGPEASQA). E367 is a binding site for [CaMn4O5] cluster. The helical transmembrane segment at 447-471 (RARAAAAGFEKGIDRDFEPVLSMTP) threads the bilayer.

The protein belongs to the PsbB/PsbC family. PsbC subfamily. As to quaternary structure, PSII is composed of 1 copy each of membrane proteins PsbA, PsbB, PsbC, PsbD, PsbE, PsbF, PsbH, PsbI, PsbJ, PsbK, PsbL, PsbM, PsbT, PsbX, PsbY, PsbZ, Psb30/Ycf12, at least 3 peripheral proteins of the oxygen-evolving complex and a large number of cofactors. It forms dimeric complexes. Binds multiple chlorophylls and provides some of the ligands for the Ca-4Mn-5O cluster of the oxygen-evolving complex. It may also provide a ligand for a Cl- that is required for oxygen evolution. PSII binds additional chlorophylls, carotenoids and specific lipids. serves as cofactor.

Its subcellular location is the plastid. The protein resides in the chloroplast thylakoid membrane. In terms of biological role, one of the components of the core complex of photosystem II (PSII). It binds chlorophyll and helps catalyze the primary light-induced photochemical processes of PSII. PSII is a light-driven water:plastoquinone oxidoreductase, using light energy to abstract electrons from H(2)O, generating O(2) and a proton gradient subsequently used for ATP formation. This chain is Photosystem II CP43 reaction center protein, found in Jasminum nudiflorum (Winter jasmine).